The sequence spans 162 residues: Ribosome maturation factor RimP (162 aa).

This sequence belongs to the RimP family.

The protein resides in the cytoplasm. Functionally, required for maturation of 30S ribosomal subunits. This is Ribosome maturation factor RimP from Beutenbergia cavernae (strain ATCC BAA-8 / DSM 12333 / CCUG 43141 / JCM 11478 / NBRC 16432 / NCIMB 13614 / HKI 0122).